A 562-amino-acid polypeptide reads, in one-letter code: NAD-dependent malic enzyme (562 aa).

Residue Tyr101 is the Proton donor of the active site. Residue Arg154 coordinates NAD(+). Lys172 (proton acceptor) is an active-site residue. Residues Glu243, Asp244, and Asp267 each coordinate a divalent metal cation. Asp267 and Asn415 together coordinate NAD(+).

This sequence belongs to the malic enzymes family. Homotetramer. The cofactor is Mg(2+). Mn(2+) serves as cofactor.

The enzyme catalyses (S)-malate + NAD(+) = pyruvate + CO2 + NADH. It carries out the reaction oxaloacetate + H(+) = pyruvate + CO2. This chain is NAD-dependent malic enzyme, found in Idiomarina loihiensis (strain ATCC BAA-735 / DSM 15497 / L2-TR).